Here is a 28-residue protein sequence, read N- to C-terminus: Cyclotide vodo I1 (28 aa).

Disulfide bonds link C4-C18, C8-C20, and C13-C25.

Post-translationally, this is a cyclic peptide. Contains 3 disulfide bonds.

Its function is as follows. Probably participates in a plant defense mechanism. This chain is Cyclotide vodo I1, found in Viola odorata (Sweet violet).